The sequence spans 579 residues: MSGTLMRMAGPTVVAEGLSGASLNEVVRVGEERLLGEIIRIEGDRATIQVYEETAGLALGEPVEASGEPLAVELGPGLLGSVFDGVQRPLSELAAREGDFLGRGASLPALDRARAWEFEPAVAPGDRVEGGARLGVARAPGAPDHLVVVPPGVTGRVSEVRGGARRVDEPAVLLDGGATLALLERWPVRRPRPARRRLPPDVPFLTGQRVLDCFFPVSAGGTAVVPGGFGTGKTVLEQSLAKWAAADVVVYVGCGERGNEMSEVLDEFPRLEDPRTGGPLLARTVMIVNTSNMPVAAREASIYTGCAIAEYFRDMGRSVALMIDSTSRWAEALREISARLEEMPGEEGYPTYLASRLARFYERAGRVETLGGAEGAVTMVGAVSPPGGDLSEPVTQCSLRATGALWALSADLAHRRHYPAVDWSVSFTLEGDRLAGWFEREAGDGFGALRDEARKLLQRERELAEVAELVGTESLQDAERLVLESARLLREGFLRQSALDPADATCPPAKAFEMLRLFLEWHRRAGAAVGAGVPLRSILDTGLGARLLRLAQLPAAEVPGAAAALRADLSEALARLEAE.

Position 227–234 (227–234 (GGFGTGKT)) interacts with ATP.

This sequence belongs to the ATPase alpha/beta chains family.

The enzyme catalyses ATP + H2O + 4 H(+)(in) = ADP + phosphate + 5 H(+)(out). In terms of biological role, produces ATP from ADP in the presence of a proton gradient across the membrane. The V-type alpha chain is a catalytic subunit. The polypeptide is V-type ATP synthase alpha chain (Anaeromyxobacter sp. (strain K)).